The sequence spans 185 residues: Hypoxanthine/guanine phosphoribosyltransferase (185 aa).

This sequence belongs to the purine/pyrimidine phosphoribosyltransferase family. Archaeal HPRT subfamily. Homodimer.

Its subcellular location is the cytoplasm. It carries out the reaction IMP + diphosphate = hypoxanthine + 5-phospho-alpha-D-ribose 1-diphosphate. The catalysed reaction is GMP + diphosphate = guanine + 5-phospho-alpha-D-ribose 1-diphosphate. It functions in the pathway purine metabolism; IMP biosynthesis via salvage pathway; IMP from hypoxanthine: step 1/1. Catalyzes a salvage reaction resulting in the formation of IMP that is energically less costly than de novo synthesis. The chain is Hypoxanthine/guanine phosphoribosyltransferase from Methanococcus maripaludis (strain C5 / ATCC BAA-1333).